The primary structure comprises 970 residues: uncharacterized protein (970 aa).

The helical transmembrane segment at 11-31 (WILKIGTILGLVCLGLFGVIF) threads the bilayer. The interval 366–387 (ASNSNDNNNQNNNNNNNSSDVI) is disordered. The span at 367–387 (SNSNDNNNQNNNNNNNSSDVI) shows a compositional bias: low complexity. 11 helical membrane-spanning segments follow: residues 515-535 (FASS…LLTL), 537-557 (YKLL…SSLV), 558-578 (IFSA…FFVI), 614-634 (FFAN…VIYL), 645-665 (LMAI…IVLI), 726-746 (FLFV…LYLV), 762-782 (SNGI…YCLI), 789-809 (CLSY…VMYL), 816-836 (IDQS…FFAA), 877-897 (IESS…FGGI), and 903-923 (LVIF…AFLP).

Its subcellular location is the cell membrane. This is an uncharacterized protein from Mycoplasma genitalium (strain ATCC 33530 / DSM 19775 / NCTC 10195 / G37) (Mycoplasmoides genitalium).